An 88-amino-acid chain; its full sequence is Acyl-CoA-binding protein homolog (88 aa).

The region spanning 3–88 (PQADFDKAAG…AHELIEKYGL (86 aa)) is the ACB domain. Residues lysine 15, 30 to 34 (YGLYK), lysine 52, lysine 56, and tyrosine 75 contribute to the an acyl-CoA site.

This sequence belongs to the ACBP family. In terms of tissue distribution, brain. Is selectively expressed in glial cells.

It localises to the endoplasmic reticulum. The protein resides in the golgi apparatus. Its function is as follows. May play important functions in the control of brain and pituitary activities. May regulate GABA neurotransmission through a paracrine and/or autocrine mechanism. May not bind acyl-CoA esters. In Pelophylax ridibundus (Marsh frog), this protein is Acyl-CoA-binding protein homolog.